A 185-amino-acid chain; its full sequence is Ribosome-recycling factor (185 aa).

It belongs to the RRF family.

It localises to the cytoplasm. In terms of biological role, responsible for the release of ribosomes from messenger RNA at the termination of protein biosynthesis. May increase the efficiency of translation by recycling ribosomes from one round of translation to another. The polypeptide is Ribosome-recycling factor (Xylella fastidiosa (strain 9a5c)).